An 838-amino-acid polypeptide reads, in one-letter code: MGDIIRIKRHHYVHILDNNTNVTRCMVGPLVYTRKENERCLFNPKPCIVVPPRFYCIVQNPCVRDASGNPVIGENSSVMLRMGEEEICFEQEPFPLQPGEVLKREEEEWLFKLKLIPVNTGYHVRCLCDFTDKNSVLRRAGTEWLVEGPQTYVPRVEVEVLREVHAHIISPNTALHIRALVKFTDRTGVPREAGDLWTVRTVGAYLPAVEEDVIGTFQGITLTDTEAVHLEALSNFTDVYGKRRRAGERWLVTKEDASIHIPDVHEKVSGKVRAIVLNEKEYCVVQNPLGADGLNEFGRKEVRKGECRFFLHPQEELLGGMQPINVVSKDQALLLQAVDFFDDNGKIRRPGEKWMLHGPAEYIPDVNVRILEQRNLIALDKNEGIYVMNTTTGVVRVVIGKPYMLNENEVLWEKDLSPKVEELLAFANGCMSEGERNPSFKSTRVRHRVVRFNVQHNAAVQIYDYKQKKLRVVLGPNLVILSPDEEFTVVSLSGGKPKVPNLLHCLQLFLGPRFSSDRIVVETSDHARLELDLSYNWYFDVNREEPDAKIFSVPDFIGDCCKTIASRIRGAVAAEDFDSFHRNSAKIIRVAVFGRGENGEINTSLRFSANNLVVTNIDIQSVEPTDAKTRDSLQKSVQLAIEITTKSQEAAARHGKERKDQEARGKLERQKLLDKIEVERTKTKWLQLQAQSEAVQASGQSVAEAKAKAESLLIEVDSELKQAEMRAKAYRITAESELKKQKQKLELELEFTKRQNELDIMKARQIAETEAERVQRMVNAIGRETIVAVAQAGPEMQAKLLGGLGLKGYLITDGKSPVNLFNTAQGLIDAGSSAQEHS.

MVP repeat units lie at residues 13–52 (VHIL…VVPP), 53–114 (RFYC…FKLK), 118–170 (VNTG…HIIS), 171–223 (PNTA…ITLT), 224–278 (DTEA…IVLN), 280–328 (KEYC…NVVS), 329–380 (KDQA…IALD), and 381–433 (KNEG…CMSE).

In terms of assembly, the vault ribonucleoprotein particle is a huge (400 A x 670 A) cage structure of 12.9 MDa. It consists of a dimer of half-vaults, with each half-vault comprising 39 identical major vault protein (MVP) chains, PARP4 and one or more vault RNAs (vRNAs).

It is found in the cytoplasm. The protein resides in the nucleus. In terms of biological role, required for normal vault structure. Vaults are multi-subunit structures that may act as scaffolds for proteins involved in signal transduction. Vaults may also play a role in nucleo-cytoplasmic transport. The chain is Major vault protein from Trypanosoma cruzi (strain CL Brener).